The sequence spans 570 residues: Vacuolar protein sorting-associated protein 45 (570 aa).

A phosphoserine mark is found at Ser307 and Ser441.

The protein belongs to the STXBP/unc-18/SEC1 family. As to quaternary structure, interacts with STX6. Interacts with ZFYVE20. In terms of tissue distribution, ubiquitous. Expression was highest in testis, heart and brain, intermediate in kidney, spleen, prostate, ovary, small intestine and thymus and low in lung, skeletal muscle, placenta, colon, pancreas, peripheral blood leukocytes and liver.

The protein resides in the golgi apparatus membrane. Its subcellular location is the endosome membrane. In terms of biological role, may play a role in vesicle-mediated protein trafficking from the Golgi stack through the trans-Golgi network. This is Vacuolar protein sorting-associated protein 45 (VPS45) from Homo sapiens (Human).